A 428-amino-acid polypeptide reads, in one-letter code: Aspartate--tRNA(Asp) ligase (428 aa).

Glu-166 is a binding site for L-aspartate. The segment at Gln-188–Lys-191 is aspartate. An L-aspartate-binding site is contributed by Arg-210. ATP-binding positions include Arg-210–Glu-212, Arg-218–Leu-220, and Glu-351. Glu-351 and Ser-354 together coordinate Mg(2+). Residues Ser-354 and Arg-358 each contribute to the L-aspartate site. An ATP-binding site is contributed by Gly-399–Arg-402.

It belongs to the class-II aminoacyl-tRNA synthetase family. Type 2 subfamily. In terms of assembly, homodimer. Requires Mg(2+) as cofactor.

It is found in the cytoplasm. The enzyme catalyses tRNA(Asp) + L-aspartate + ATP = L-aspartyl-tRNA(Asp) + AMP + diphosphate. Catalyzes the attachment of L-aspartate to tRNA(Asp) in a two-step reaction: L-aspartate is first activated by ATP to form Asp-AMP and then transferred to the acceptor end of tRNA(Asp). The chain is Aspartate--tRNA(Asp) ligase from Thermoplasma acidophilum (strain ATCC 25905 / DSM 1728 / JCM 9062 / NBRC 15155 / AMRC-C165).